A 1063-amino-acid polypeptide reads, in one-letter code: Coiled-coil domain-containing protein 187 (1063 aa).

7 disordered regions span residues 1–41 (MPTL…AADW), 62–184 (RWPG…SRLH), 219–278 (RVEA…KDED), 300–319 (PPPV…PALT), 392–484 (RKGG…ERLG), 496–539 (GQAC…ATQP), and 551–658 (WEDP…LEEK). Positions 111 to 124 (SSVSSGRLSCSSGG) are enriched in low complexity. Basic and acidic residues predominate over residues 146-160 (RKSDARLEQLRDKIR). Polar residues predominate over residues 163–181 (AWQQGSCASLGTSAPSSAS). Over residues 219–233 (RVEAKASHGQGRELS) the composition is skewed to basic and acidic residues. Basic and acidic residues-rich tracts occupy residues 431-442 (TERKHSSLERAR) and 472-484 (SFQR…ERLG). A compositionally biased stretch (low complexity) spans 508–517 (QRQGPSSQRP). Residues 816-851 (HLRHKQAQLQALETTAKVLKQRVDSLTAKLQGAEAL) are a coiled coil. The tract at residues 1010–1030 (PRSCGKGDPADRPWAGWSGGR) is disordered.

The polypeptide is Coiled-coil domain-containing protein 187 (Homo sapiens (Human)).